The primary structure comprises 139 residues: Probable disulfide formation protein C 2 (139 aa).

The helical transmembrane segment at 6-25 (KYHIAIAWMIATSAMLISLF) threads the bilayer. A disulfide bond links Cys-35 and Cys-38. 2 consecutive transmembrane segments (helical) span residues 40–59 (YQRMAMYPLVLILGIGMYRK) and 66–83 (YAFPFTCIGLILSVYQIT). An intrachain disulfide couples Cys-95 to Cys-101. The chain crosses the membrane as a helical span at residues 110 to 133 (GFISIPMLSFIGFLVIIILIYIES).

This sequence belongs to the DsbB family. BdbC subfamily.

It localises to the cell membrane. In terms of biological role, required for disulfide bond formation in some proteins. The chain is Probable disulfide formation protein C 2 (bdbC2) from Bacillus cereus (strain ATCC 10987 / NRS 248).